Here is a 261-residue protein sequence, read N- to C-terminus: Glucose 1-dehydrogenase 4 (261 aa).

An NAD(+)-binding site is contributed by 11-35; sequence VITGGSTGLGRAMAVRFGQEEAKVV. S145 is a binding site for substrate. Y158 acts as the Proton acceptor in catalysis.

It belongs to the short-chain dehydrogenases/reductases (SDR) family. In terms of assembly, homotetramer.

It carries out the reaction D-glucose + NAD(+) = D-glucono-1,5-lactone + NADH + H(+). The enzyme catalyses D-glucose + NADP(+) = D-glucono-1,5-lactone + NADPH + H(+). This is Glucose 1-dehydrogenase 4 (gdhIV) from Priestia megaterium (Bacillus megaterium).